A 616-amino-acid chain; its full sequence is Formin-binding protein 1 (616 aa).

Positions 1 to 79 (MSWGTELWDQ…CKAFLSTLNE (79 aa)) are required for self-association and induction of membrane tubulation. One can recognise an F-BAR domain in the interval 1–264 (MSWGTELWDQ…AAESIDQKND (264 aa)). The interaction with microtubules stretch occupies residues 1 to 334 (MSWGTELWDQ…KKNKLMSLLT (334 aa)). Lys-66 and Lys-110 each carry N6-acetyllysine. Positions 67–259 (YTACKAFLST…DGIVKAAESI (193 aa)) form a coiled coil. A required for self-association and induction of membrane tubulation region spans residues 251 to 616 (GIVKAAESID…VYLDKNAKGS (366 aa)). Disordered stretches follow at residues 280–314 (GDIEFEDYTQPMKRTVSDNSLSSSKEGKPELRFGG) and 332–366 (LLTSPHQPPPPPPASASPSAVPNGPQSPKQPKEPL). Residues Ser-296 and Ser-299 each carry the phosphoserine modification. The span at 337–346 (HQPPPPPPAS) shows a compositional bias: pro residues. Residues Ser-348 and Ser-358 each carry the phosphoserine modification. Residues 398–490 (PEDFSNFPPE…VEGRLPARSE (93 aa)) adopt a coiled-coil conformation. Residues 399-551 (EDFSNFPPEQ…FDDEEPLPAI (153 aa)) are interaction with RND2. The REM-1 domain occupies 403 to 480 (NFPPEQRRKK…AQKFEAWLAE (78 aa)). The interval 487–531 (ARSEQARRQSGLYDGQTHQTVTNCAQDRESPDGSYTEEQSQESEH) is disordered. Residues 494 to 616 (RQSGLYDGQT…VYLDKNAKGS (123 aa)) are interaction with PDE6G. Ser-496 carries the phosphoserine modification. Tyr-499 carries the phosphotyrosine modification. Residues 502-511 (QTHQTVTNCA) show a composition bias toward polar residues. The interval 513–616 (DRESPDGSYT…VYLDKNAKGS (104 aa)) is required for interaction with TNKS. Position 520 is a phosphoserine (Ser-520). Residues 534 to 616 (LAPDFDDEFD…VYLDKNAKGS (83 aa)) form an interaction with DNM1 and DNM3 region. One can recognise an SH3 domain in the interval 549–610 (PAIGTCKALY…PTSYVEVYLD (62 aa)). The segment at 549–616 (PAIGTCKALY…VYLDKNAKGS (68 aa)) is interaction with ARHGAP17, DAAM1, DIAPH1 and DIAPH2. Residues 552-608 (GTCKALYTFEGQNEGTISVVEGETLSVIEEDKGDGWTRIRRNEDEEGYVPTSYVEVY) form an interaction with DNM2 and WASL region. Positions 552–609 (GTCKALYTFEGQNEGTISVVEGETLSVIEEDKGDGWTRIRRNEDEEGYVPTSYVEVYL) are interaction with FASLG.

The protein belongs to the FNBP1 family. As to quaternary structure, homodimerizes, the dimers can polymerize end-to-end to form filamentous structures. Interacts specifically with GTP-bound RND2 and CDC42. Interacts with AKAP9, ARHGAP17, DAAM1, DIAPH1, DIAPH2, DNM1, DNM2, DNM3, FASLG/FASL, microtubules, PDE6G, SNX2 and WASL/N-WASP. May interact with TNKS. In terms of tissue distribution, expressed in brain and testis.

The protein resides in the cytoplasm. It localises to the cytoskeleton. The protein localises to the cell cortex. It is found in the lysosome. Its subcellular location is the cytoplasmic vesicle. The protein resides in the cell membrane. It localises to the membrane. The protein localises to the clathrin-coated pit. Required to coordinate membrane tubulation with reorganization of the actin cytoskeleton during the late stage of clathrin-mediated endocytosis. Binds to lipids such as phosphatidylinositol 4,5-bisphosphate and phosphatidylserine and promotes membrane invagination and the formation of tubules. Also enhances actin polymerization via the recruitment of WASL/N-WASP, which in turn activates the Arp2/3 complex. Actin polymerization may promote the fission of membrane tubules to form endocytic vesicles. May act as a link between RND2 signaling and regulation of the actin cytoskeleton. May be required for the lysosomal retention of FASLG/FASL. This chain is Formin-binding protein 1 (Fnbp1), found in Mus musculus (Mouse).